Consider the following 596-residue polypeptide: MSQGKIIKVSGPLVLASGMQEANIQDICRVGDLGLIGEIIEMRRDQASIQVYEETSGLGPGEPVITTGSPLSVELGPGLISQMFDGIQRPLERFQTITESDFLVRGVQLPNLDRETKWNFVPSLSVGDAVEAGDILGTVQETNLVEHRIMVPVGVSGRLANISAGSFTVEETVYEIEQAEGSIFKGTLMQKWPVRRGRPFAQKLIPVEPLVTGQRVIDTFFPVTKGGAAAVPGPFGAGKTVVQHQVAKFANVDIVIYVGCGERGNEMTDVLNEFPELIDPSTGQSIMQRTVLIANTSNMPVAAREASIYTGITIAEYFRDMGYSVAIMADSTSRWAEALREMSGRLEEMPGDEGYPAYLGSRIAEYYERAGRVKTLGSTAREGSITAIGAVSPPGGDISEPVTQNTLRIVKVFWGLDAQLAQRRHFPAINWLSSYSLYLDEVGAYIDQHEKIAWAEKVTKAMNILQKESELQEIVRLVGLDSLSEKDRLTMNAAKMIREDYLQQNAFDDVDTYTSFKKQVALLSNILTFDAEANRALELGAYFREIMEGTVELRDRIARSKFVHEDQLEKIQALSQTIEETLHQILAQGGLDNERH.

233-240 (GPFGAGKT) provides a ligand contact to ATP.

Belongs to the ATPase alpha/beta chains family.

It carries out the reaction ATP + H2O + 4 H(+)(in) = ADP + phosphate + 5 H(+)(out). In terms of biological role, produces ATP from ADP in the presence of a proton gradient across the membrane. The V-type alpha chain is a catalytic subunit. The sequence is that of V-type ATP synthase alpha chain from Streptococcus gordonii (strain Challis / ATCC 35105 / BCRC 15272 / CH1 / DL1 / V288).